The chain runs to 880 residues: Probable receptor-like protein kinase At5g38990 (880 aa).

A signal peptide spans 1-21 (MICHVLVIFTILVSAVVDATA). The Extracellular segment spans residues 22–440 (SYEPTDVFLI…GKGKSSHVLP (419 aa)). N-linked (GlcNAc...) asparagine glycans are attached at residues Asn-46, Asn-136, Asn-158, Asn-210, Asn-256, Asn-263, Asn-297, and Asn-324. A helical transmembrane segment spans residues 441–461 (IIIAVVGSAVALAFFVLVVVL). Topologically, residues 462–880 (VVMKRKKKSN…FSEINEPKAR (419 aa)) are cytoplasmic. The interval 471–505 (NESSVDTTNKPSTNSSWGPLLHGTGSTNTKSASSL) is disordered. Polar residues-rich tracts occupy residues 472–487 (ESSV…NSSW) and 494–505 (TGSTNTKSASSL). The region spanning 525–810 (FEEKLIIGVG…EFALQLHETA (286 aa)) is the Protein kinase domain. Residues 531–539 (IGVGGFGSV) and Lys-554 contribute to the ATP site. Asp-653 serves as the catalytic Proton acceptor. Residues 820–846 (LDLMPSGEVGTTTDGEDDLFSRTTGHV) are disordered.

Belongs to the protein kinase superfamily. Ser/Thr protein kinase family.

The protein resides in the membrane. The protein is Probable receptor-like protein kinase At5g38990 of Arabidopsis thaliana (Mouse-ear cress).